A 185-amino-acid polypeptide reads, in one-letter code: UPF0397 protein LBA0922 (185 aa).

The next 5 membrane-spanning stretches (helical) occupy residues 11–31 (VVAI…TSIP), 45–65 (FLAF…GFIG), 72–92 (IMYG…GWII), 111–131 (IILF…VVAP), and 146–166 (FVQG…IGTI).

The protein belongs to the UPF0397 family.

Its subcellular location is the cell membrane. The protein is UPF0397 protein LBA0922 of Lactobacillus acidophilus (strain ATCC 700396 / NCK56 / N2 / NCFM).